We begin with the raw amino-acid sequence, 294 residues long: MEIRRRPPNPKVQVAHLEYAIPHQDGEPRNILEKIVWEKDREIETARQRMPLVQLKARVAELPPALDFLGALRQAPVAPAVIAEVKKASPSKGVIREDFDPVAIAKAYAAGGASCLSVLTDRTFFQGGFDVLVAVREAVDLPLLCKDFILSPHQLYQARAAGADAALLIAAILTDQDLAYLQKVAATLGLTVLVEVHDAAEMERILTLGGFPLIGINNRDLTSFETDLATTEALTQQFADRLRAQDAFLVSESGLFARADLNRVQRSGAGAVLVGEALMRQDNVEQGLRDLIAP.

It belongs to the TrpC family.

It catalyses the reaction 1-(2-carboxyphenylamino)-1-deoxy-D-ribulose 5-phosphate + H(+) = (1S,2R)-1-C-(indol-3-yl)glycerol 3-phosphate + CO2 + H2O. It participates in amino-acid biosynthesis; L-tryptophan biosynthesis; L-tryptophan from chorismate: step 4/5. In Synechococcus sp. (strain WH7803), this protein is Indole-3-glycerol phosphate synthase.